The following is an 838-amino-acid chain: Translation initiation factor IF-2 (838 aa).

Positions 50–108 (VQSGKKPESPEKKDIKQNTQKEAPETQTQQKPIEQEVETKQNIDSTPIKVEPKQESLAS) are disordered. Over residues 54–65 (KKPESPEKKDIK) the composition is skewed to basic and acidic residues. Positions 66–81 (QNTQKEAPETQTQQKP) are enriched in polar residues. The region spanning 337-506 (SRAPVVTIMG…LLQAELLELK (170 aa)) is the tr-type G domain. A G1 region spans residues 346–353 (GHVDHGKT). Residue 346–353 (GHVDHGKT) participates in GTP binding. Positions 371–375 (GITQH) are G2. Residues 392-395 (DTPG) form a G3 region. Residues 392–396 (DTPGH) and 446–449 (NKMD) contribute to the GTP site. Residues 446–449 (NKMD) are G4. The tract at residues 482-484 (SAK) is G5.

The protein belongs to the TRAFAC class translation factor GTPase superfamily. Classic translation factor GTPase family. IF-2 subfamily.

The protein localises to the cytoplasm. Its function is as follows. One of the essential components for the initiation of protein synthesis. Protects formylmethionyl-tRNA from spontaneous hydrolysis and promotes its binding to the 30S ribosomal subunits. Also involved in the hydrolysis of GTP during the formation of the 70S ribosomal complex. In Campylobacter fetus subsp. fetus (strain 82-40), this protein is Translation initiation factor IF-2.